The following is a 2207-amino-acid chain: DNA polymerase epsilon catalytic subunit A (2207 aa).

Disordered stretches follow at residues 1–20, 1201–1233, and 1934–1961; these read MPSR…AASF, SMEK…PFAS, and RPES…ENEE. Cys-2075, Cys-2078, Cys-2113, and Cys-2116 together coordinate Zn(2+). The CysA-type zinc-finger motif lies at 2075–2116; that stretch reads CSACCLIRDLDLCRDEDVLPERGSGSGPDSATSSRPWCCPFC. The [4Fe-4S] cluster site is built by Cys-2147, Cys-2150, Cys-2162, and Cys-2164. The CysB motif signature appears at 2147–2164; sequence CSKCGTLKISEFMEHCSC.

Belongs to the DNA polymerase type-B family. In terms of assembly, heterotetramer. Consists of 4 subunits: pol2, dpb2, dpb3 and dpb4. The cofactor is [4Fe-4S] cluster.

It localises to the nucleus. It catalyses the reaction DNA(n) + a 2'-deoxyribonucleoside 5'-triphosphate = DNA(n+1) + diphosphate. Its function is as follows. DNA polymerase II participates in chromosomal DNA replication. This chain is DNA polymerase epsilon catalytic subunit A (pol2), found in Emericella nidulans (strain FGSC A4 / ATCC 38163 / CBS 112.46 / NRRL 194 / M139) (Aspergillus nidulans).